The chain runs to 468 residues: Tissue alpha-L-fucosidase (468 aa).

The signal sequence occupies residues 1-29 (MRAPGERWRPAGAALWLLLLLLLLGATES). Residue Thr-172 is modified to Phosphothreonine. 3 N-linked (GlcNAc...) asparagine glycosylation sites follow: Asn-243, Asn-270, and Asn-384.

This sequence belongs to the glycosyl hydrolase 29 family. Homotetramer.

Its subcellular location is the lysosome. It carries out the reaction an alpha-L-fucoside + H2O = L-fucose + an alcohol. It catalyses the reaction a neolactoside IV(2)-alpha-Fuc-nLc4Cer(d18:1(4E)) + H2O = a neolactoside nLc4Cer(d18:1(4E)) + L-fucose. The catalysed reaction is a neolactoside IV(2)-alpha-Fuc-nLc4Cer(d18:0) + H2O = a neolactoside nLc4Cer(d18:0) + L-fucose. Alpha-L-fucosidase is responsible for hydrolyzing the alpha-1,6-linked fucose joined to the reducing-end N-acetylglucosamine of the carbohydrate moieties of glycoproteins. The polypeptide is Tissue alpha-L-fucosidase (FUCA1) (Macaca fascicularis (Crab-eating macaque)).